The following is a 219-amino-acid chain: Orotate phosphoribosyltransferase (219 aa).

Residue Lys-26 coordinates 5-phospho-alpha-D-ribose 1-diphosphate. 34–35 (FF) contacts orotate. Residues 72–73 (YK), Arg-98, Lys-99, Lys-102, His-104, and 124–132 (DDVITAGTA) each bind 5-phospho-alpha-D-ribose 1-diphosphate. Positions 128 and 156 each coordinate orotate.

The protein belongs to the purine/pyrimidine phosphoribosyltransferase family. PyrE subfamily. As to quaternary structure, homodimer. The cofactor is Mg(2+).

The catalysed reaction is orotidine 5'-phosphate + diphosphate = orotate + 5-phospho-alpha-D-ribose 1-diphosphate. It functions in the pathway pyrimidine metabolism; UMP biosynthesis via de novo pathway; UMP from orotate: step 1/2. In terms of biological role, catalyzes the transfer of a ribosyl phosphate group from 5-phosphoribose 1-diphosphate to orotate, leading to the formation of orotidine monophosphate (OMP). The sequence is that of Orotate phosphoribosyltransferase from Stenotrophomonas maltophilia (strain R551-3).